A 146-amino-acid polypeptide reads, in one-letter code: ATP synthase epsilon chain (146 aa).

This sequence belongs to the ATPase epsilon chain family. F-type ATPases have 2 components, CF(1) - the catalytic core - and CF(0) - the membrane proton channel. CF(1) has five subunits: alpha(3), beta(3), gamma(1), delta(1), epsilon(1). CF(0) has three main subunits: a, b and c.

The protein localises to the cell membrane. Its function is as follows. Produces ATP from ADP in the presence of a proton gradient across the membrane. The polypeptide is ATP synthase epsilon chain (Lactobacillus delbrueckii subsp. bulgaricus (strain ATCC 11842 / DSM 20081 / BCRC 10696 / JCM 1002 / NBRC 13953 / NCIMB 11778 / NCTC 12712 / WDCM 00102 / Lb 14)).